The primary structure comprises 326 residues: MAMTSAVKDELSRLSVTKTCCRRSEVSSLLRFAGGLHIVAGRVVVEAELDSGSSARRLRKEIHELFGHQSDVHVITSGGLRKGTRYVVRVVKDGEGLARQTGLLDPRGRPVRGLPAHVVSGGACDSESAWRGAFLAHGSLTEPGRSSSLEVTCPGPEAALALVGAARRLGIQAKSREVRGADRVVVRDGDAIGALLTRLGAHSSVLAWEERRMRREVRATANRLANFDDANLRRSARAAVAAAARVERALELLGPTAPDHLLVAGKLRLSHRQASLEELGQLAEPPMTKDAVAGRIRRLLAMADKRARELGLPDTESAVTAEMLEA.

A DNA-binding region (H-T-H motif) is located at residues 275–308; it reads SLEELGQLAEPPMTKDAVAGRIRRLLAMADKRAR.

Belongs to the WhiA family.

Functionally, involved in cell division and chromosome segregation. This chain is Probable cell division protein WhiA, found in Saccharopolyspora erythraea (strain ATCC 11635 / DSM 40517 / JCM 4748 / NBRC 13426 / NCIMB 8594 / NRRL 2338).